The following is a 165-amino-acid chain: LOB domain-containing protein 3 (165 aa).

Residues 13–115 form the LOB domain; that stretch reads SPCAGCKLLR…TQLAFAQAEL (103 aa).

This sequence belongs to the LOB domain-containing protein family. As to expression, expressed in young shoots, roots, stems, leaves and flowers. At the bases of lateral organs formed from vegetative, inflorescence, and floral meristems.

The protein resides in the nucleus. This chain is LOB domain-containing protein 3 (LBD3), found in Arabidopsis thaliana (Mouse-ear cress).